Here is a 231-residue protein sequence, read N- to C-terminus: NADH-ubiquinone oxidoreductase chain 4 (231 aa).

A run of 6 helical transmembrane segments spans residues 1–21 (PIAG…YGII), 34–54 (LFLP…LTCL), 61–80 (SLIA…AIII), 84–106 (WGLS…LFCL), 128–148 (ILPM…ATPP), and 169–189 (TIIL…HMFL).

It belongs to the complex I subunit 4 family.

The protein resides in the mitochondrion membrane. The enzyme catalyses a ubiquinone + NADH + 5 H(+)(in) = a ubiquinol + NAD(+) + 4 H(+)(out). In terms of biological role, core subunit of the mitochondrial membrane respiratory chain NADH dehydrogenase (Complex I) that is believed to belong to the minimal assembly required for catalysis. Complex I functions in the transfer of electrons from NADH to the respiratory chain. The immediate electron acceptor for the enzyme is believed to be ubiquinone. This Metlapilcoatlus nummifer (Mexican jumping pitviper) protein is NADH-ubiquinone oxidoreductase chain 4 (MT-ND4).